A 124-amino-acid chain; its full sequence is Small ribosomal subunit protein uS12 (124 aa).

The interval 1–25 is disordered; it reads MPTFNQLVRNGRKPPRWKTSSPALE. 3-methylthioaspartic acid is present on Asp89. Residues 104–124 form a disordered region; sequence TAGVANRKQSRSKYGAKRPKS. A compositionally biased stretch (basic residues) spans 111 to 124; that stretch reads KQSRSKYGAKRPKS.

This sequence belongs to the universal ribosomal protein uS12 family. Part of the 30S ribosomal subunit. Contacts proteins S8 and S17. May interact with IF1 in the 30S initiation complex.

In terms of biological role, with S4 and S5 plays an important role in translational accuracy. Functionally, interacts with and stabilizes bases of the 16S rRNA that are involved in tRNA selection in the A site and with the mRNA backbone. Located at the interface of the 30S and 50S subunits, it traverses the body of the 30S subunit contacting proteins on the other side and probably holding the rRNA structure together. The combined cluster of proteins S8, S12 and S17 appears to hold together the shoulder and platform of the 30S subunit. The sequence is that of Small ribosomal subunit protein uS12 from Solibacter usitatus (strain Ellin6076).